Here is a 216-residue protein sequence, read N- to C-terminus: Thiopurine S-methyltransferase (216 aa).

Positions 10, 45, 66, and 123 each coordinate S-adenosyl-L-methionine.

This sequence belongs to the class I-like SAM-binding methyltransferase superfamily. TPMT family.

The protein localises to the cytoplasm. The enzyme catalyses S-adenosyl-L-methionine + a thiopurine = S-adenosyl-L-homocysteine + a thiopurine S-methylether.. The sequence is that of Thiopurine S-methyltransferase from Pseudomonas putida (strain ATCC 47054 / DSM 6125 / CFBP 8728 / NCIMB 11950 / KT2440).